The sequence spans 40 residues: Auxin-responsive endogenous peptide 1 (40 aa).

A helical membrane pass occupies residues 7 to 29 (LIYRLVVRCFLDYSICAPFYFYH).

As to expression, expressed in cotyledons, hypocotyls, roots, newly developing leaves and shoot apical meristem. Not detected in flowers, siliques or mature leaves.

It localises to the cytoplasm. The protein resides in the nucleus. The protein localises to the membrane. Functionally, negative regulator of the auxin response. The protein is Auxin-responsive endogenous peptide 1 of Arabidopsis thaliana (Mouse-ear cress).